Reading from the N-terminus, the 461-residue chain is Protein naked cuticle homolog 2 (461 aa).

Residues 1 to 106 form a disordered region; the sequence is MGKFQSKHAA…DGEKAASREG (106 aa). The N-myristoyl glycine moiety is linked to residue Gly2. Basic and acidic residues-rich tracts occupy residues 34–73 and 97–106; these read RGAE…DKGS and DGEKAASREG. The tract at residues 121 to 186 is interaction with DVL1, DVL2 and DVL3; it reads QCDVSVEEDN…LRVKLTVSPE (66 aa). The region spanning 127–162 is the EF-hand domain; sequence EEDNRQEWTFTLYDFDNSGKVTREDMSSLMHTIYEV. Asp140, Asp142, Ser144, Lys146, and Asp151 together coordinate Ca(2+). Disordered stretches follow at residues 176–205, 263–302, 321–359, 372–414, and 441–461; these read TLRV…PTRG, YTSK…HAIH, TRAL…PGKA, SAQD…GQPT, and HEHH…FHPS. Over residues 188–205 the composition is skewed to basic and acidic residues; that stretch reads SSKKECPLTGQDREPTRG. Residues 307–396 form an interaction with TGFA region; the sequence is QVLAEHVIPA…PPQPYGHKRY (90 aa). Positions 341–350 are enriched in low complexity; that stretch reads PKGPGKPLGT. Residues 380 to 390 show a composition bias toward pro residues; the sequence is PQPPPQPPPQP.

It belongs to the NKD family. As to quaternary structure, interacts with RNF25, TGFA (via cytoplasmic domain), and PPP2R3A. Interacts with DVL1, DVL2 and DVL3. Ubiquitinated, leading to rapid proteasomal degradation. Interaction with TGFA interferes with RNF25 binding and protects against ubiquitination mediated by RNF25. As to expression, expressed in the cecum, colon, esophagus, ileum, jejunum, skin and stomach.

It is found in the cell membrane. The protein resides in the cytoplasm. It localises to the cytoplasmic vesicle. Its function is as follows. Cell autonomous antagonist of the canonical Wnt signaling pathway. May activate a second Wnt signaling pathway that controls planar cell polarity. Required for processing of TGFA and for targeting of TGFA to the basolateral membrane of polarized epithelial cells. This Mus musculus (Mouse) protein is Protein naked cuticle homolog 2 (Nkd2).